We begin with the raw amino-acid sequence, 67 residues long: Conotoxin Cp1.1 (67 aa).

The signal sequence occupies residues methionine 1–threonine 26. Disulfide bonds link cysteine 29–cysteine 43, cysteine 36–cysteine 48, cysteine 42–cysteine 52, and cysteine 47–cysteine 56. Tyrosine amide is present on tyrosine 60. A propeptide spanning residues alanine 64–glutamine 67 is cleaved from the precursor.

It belongs to the conotoxin I2 superfamily. Expressed by the venom duct.

The protein resides in the secreted. This is Conotoxin Cp1.1 from Conus capitaneus (Captain cone).